A 207-amino-acid chain; its full sequence is Cytochrome c biogenesis ATP-binding export protein CcmA (207 aa).

The 202-residue stretch at 6–207 folds into the ABC transporter domain; that stretch reads LCAEGLECIR…RGDCRSLNLS (202 aa). 38–45 provides a ligand contact to ATP; that stretch reads GANGAGKT.

Belongs to the ABC transporter superfamily. CcmA exporter (TC 3.A.1.107) family. As to quaternary structure, the complex is composed of two ATP-binding proteins (CcmA) and two transmembrane proteins (CcmB).

It localises to the cell inner membrane. It catalyses the reaction heme b(in) + ATP + H2O = heme b(out) + ADP + phosphate + H(+). Part of the ABC transporter complex CcmAB involved in the biogenesis of c-type cytochromes; once thought to export heme, this seems not to be the case, but its exact role is uncertain. Responsible for energy coupling to the transport system. This Methylococcus capsulatus (strain ATCC 33009 / NCIMB 11132 / Bath) protein is Cytochrome c biogenesis ATP-binding export protein CcmA.